Here is a 201-residue protein sequence, read N- to C-terminus: Holliday junction branch migration complex subunit RuvA (201 aa).

The tract at residues 1–63 (MYDYIKGTVT…EDNISLFGFQ (63 aa)) is domain I. The segment at 64 to 142 (TTEERYLFKK…DVVASEIVYV (79 aa)) is domain II. Positions 143 to 153 (APENDMVAGLS) are flexible linker. The domain III stretch occupies residues 153–201 (SPQLEEAVLALEALGYSTRELKKVIPKLAKEEDLTSDAYIKLALQLMTK).

Belongs to the RuvA family. Homotetramer. Forms an RuvA(8)-RuvB(12)-Holliday junction (HJ) complex. HJ DNA is sandwiched between 2 RuvA tetramers; dsDNA enters through RuvA and exits via RuvB. An RuvB hexamer assembles on each DNA strand where it exits the tetramer. Each RuvB hexamer is contacted by two RuvA subunits (via domain III) on 2 adjacent RuvB subunits; this complex drives branch migration. In the full resolvosome a probable DNA-RuvA(4)-RuvB(12)-RuvC(2) complex forms which resolves the HJ.

Its subcellular location is the cytoplasm. Functionally, the RuvA-RuvB-RuvC complex processes Holliday junction (HJ) DNA during genetic recombination and DNA repair, while the RuvA-RuvB complex plays an important role in the rescue of blocked DNA replication forks via replication fork reversal (RFR). RuvA specifically binds to HJ cruciform DNA, conferring on it an open structure. The RuvB hexamer acts as an ATP-dependent pump, pulling dsDNA into and through the RuvAB complex. HJ branch migration allows RuvC to scan DNA until it finds its consensus sequence, where it cleaves and resolves the cruciform DNA. The sequence is that of Holliday junction branch migration complex subunit RuvA from Listeria monocytogenes serotype 4a (strain HCC23).